The following is a 274-amino-acid chain: Thymidylate synthase (274 aa).

Arg-21 is a dUMP binding site. Residue His-51 coordinates (6R)-5,10-methylene-5,6,7,8-tetrahydrofolate. DUMP is bound at residue 123–124 (RR). The Nucleophile role is filled by Cys-156. Residues 176–179 (RSAD), Asn-187, and 217–219 (HIY) each bind dUMP. Asp-179 provides a ligand contact to (6R)-5,10-methylene-5,6,7,8-tetrahydrofolate. Ser-273 serves as a coordination point for (6R)-5,10-methylene-5,6,7,8-tetrahydrofolate.

The protein belongs to the thymidylate synthase family. Bacterial-type ThyA subfamily. Homodimer.

The protein resides in the cytoplasm. The catalysed reaction is dUMP + (6R)-5,10-methylene-5,6,7,8-tetrahydrofolate = 7,8-dihydrofolate + dTMP. The protein operates within pyrimidine metabolism; dTTP biosynthesis. Catalyzes the reductive methylation of 2'-deoxyuridine-5'-monophosphate (dUMP) to 2'-deoxythymidine-5'-monophosphate (dTMP) while utilizing 5,10-methylenetetrahydrofolate (mTHF) as the methyl donor and reductant in the reaction, yielding dihydrofolate (DHF) as a by-product. This enzymatic reaction provides an intracellular de novo source of dTMP, an essential precursor for DNA biosynthesis. The sequence is that of Thymidylate synthase from Francisella philomiragia subsp. philomiragia (strain ATCC 25017 / CCUG 19701 / FSC 153 / O#319-036).